The chain runs to 621 residues: Chaperone protein HscA homolog (621 aa).

This sequence belongs to the heat shock protein 70 family.

Functionally, chaperone involved in the maturation of iron-sulfur cluster-containing proteins. Has a low intrinsic ATPase activity which is markedly stimulated by HscB. The chain is Chaperone protein HscA homolog from Pseudomonas fluorescens (strain Pf0-1).